A 345-amino-acid polypeptide reads, in one-letter code: MSCPTSAGVLQTHQLLNDNSILIRDEIYGEELVSEPVLVELLQSAEVQRLQGICQHGVTGFLGITPRVTRLEHSVGAFILVRRVGAALDEQVAALLHDISHTTLSHVIDHALSKPGEGSYHEVHKARYLKTTRLPDIVAKHGISQKVFEEELFPLVEMPSPQLCADRLDYALRDAVSFGKLAMEDAQKVVSSLRAFPSATTARRLLVLDDAEVALTLSRAYTTTDKDVWSNPAHIDMYERTGRVIGELVEAGSVEDKVLWQVSDAEFWTMLRQAANPEQRRAIERLETEGVPEDDGLELPHCAKIRTLDPDVWPRGEKQPAPLSIVLPTWGTERQQYILSRTQHR.

The HD domain occupies 70–171 (RLEHSVGAFI…QLCADRLDYA (102 aa)).

Interacts with cns1.

It is found in the lipid droplet. It participates in secondary metabolite biosynthesis. Functionally, metal-dependent phosphohydrolase; part of the gene cluster that mediates the biosynthesis of cordycepin (COR) and pentostatin (PTN), two adenosine analogs with related bioactivity profiles as both mimic adenosine and can inhibit some of the processes that are adenosine dependent. Within the pathway, cns2 catalyzes dephosphorylation of 3'-AMP to produce 2'-carbonyl-3'-deoxyadenosine (2'-C-3'-dA). The first step of cordycepin biosynthesis involves hydroxyl phosphorylation of the 3'-OH position on adenosine to produce adenosine-3'-monophosphate (3'-AMP), catalyzed by kinase activity of cns3. Next, 3'-AMP is dephosphorylated to 2'-carbonyl-3'-deoxyadenosine by cns2, which is finally converted to cordycepin (3'-deoxyadenosine) by the oxidoreductase cns1. The protein is Metal-dependent phosphohydrolase cns2 of Cordyceps militaris (strain CM01) (Caterpillar fungus).